We begin with the raw amino-acid sequence, 1006 residues long: Multiple C2 domain and transmembrane region protein 9 (1006 aa).

The 108-residue stretch at Met-1–Tyr-108 folds into the C2 1 domain. The tract at residues Val-135 to Lys-156 is disordered. C2 domains are found at residues Arg-251–Tyr-371, Ser-411–Val-536, and Asn-579–Tyr-704. 5 residues coordinate Ca(2+): Asp-284, Asp-290, Asp-337, Asp-339, and Asp-344. Transmembrane regions (helical) follow at residues Met-842–Gly-862 and Ala-946–Phe-966.

It belongs to the MCTP family. The cofactor is Ca(2+). In terms of tissue distribution, expressed in incipient leaf primordia and roots meristems. Observed in flowers.

The protein resides in the cell membrane. Its subcellular location is the cytoplasm. Functionally, may function as a signaling molecule by regulating the trafficking of other regulators. This is Multiple C2 domain and transmembrane region protein 9 from Arabidopsis thaliana (Mouse-ear cress).